A 112-amino-acid polypeptide reads, in one-letter code: Nucleoid-associated protein FTW_0607 (112 aa).

Residues 1-27 form a disordered region; that stretch reads MNFDMSKLMQQAQKMQEQMKKAQQERE. Positions 17–27 are enriched in basic and acidic residues; sequence EQMKKAQQERE.

This sequence belongs to the YbaB/EbfC family. Homodimer.

It is found in the cytoplasm. It localises to the nucleoid. Functionally, binds to DNA and alters its conformation. May be involved in regulation of gene expression, nucleoid organization and DNA protection. The polypeptide is Nucleoid-associated protein FTW_0607 (Francisella tularensis subsp. tularensis (strain WY96-3418)).